The chain runs to 409 residues: tRNA(Met) cytidine acetate ligase (409 aa).

Residues 7 to 20, Gly-102, Asn-169, and Arg-194 contribute to the ATP site; that span reads VVEY…HLYH.

It belongs to the TmcAL family.

It is found in the cytoplasm. It carries out the reaction cytidine(34) in elongator tRNA(Met) + acetate + ATP = N(4)-acetylcytidine(34) in elongator tRNA(Met) + AMP + diphosphate. In terms of biological role, catalyzes the formation of N(4)-acetylcytidine (ac(4)C) at the wobble position of elongator tRNA(Met), using acetate and ATP as substrates. First activates an acetate ion to form acetyladenylate (Ac-AMP) and then transfers the acetyl group to tRNA to form ac(4)C34. The chain is tRNA(Met) cytidine acetate ligase from Clostridium botulinum (strain ATCC 19397 / Type A).